We begin with the raw amino-acid sequence, 242 residues long: Pyridoxine 5'-phosphate synthase (242 aa).

N7 is a 3-amino-2-oxopropyl phosphate binding site. 9–10 contacts 1-deoxy-D-xylulose 5-phosphate; that stretch reads DH. R18 contacts 3-amino-2-oxopropyl phosphate. The active-site Proton acceptor is H43. 1-deoxy-D-xylulose 5-phosphate is bound by residues R45 and H50. E70 acts as the Proton acceptor in catalysis. T100 is a binding site for 1-deoxy-D-xylulose 5-phosphate. H191 functions as the Proton donor in the catalytic mechanism. 3-amino-2-oxopropyl phosphate-binding positions include G192 and 213–214; that span reads GH.

It belongs to the PNP synthase family. As to quaternary structure, homooctamer; tetramer of dimers.

The protein localises to the cytoplasm. The catalysed reaction is 3-amino-2-oxopropyl phosphate + 1-deoxy-D-xylulose 5-phosphate = pyridoxine 5'-phosphate + phosphate + 2 H2O + H(+). It participates in cofactor biosynthesis; pyridoxine 5'-phosphate biosynthesis; pyridoxine 5'-phosphate from D-erythrose 4-phosphate: step 5/5. In terms of biological role, catalyzes the complicated ring closure reaction between the two acyclic compounds 1-deoxy-D-xylulose-5-phosphate (DXP) and 3-amino-2-oxopropyl phosphate (1-amino-acetone-3-phosphate or AAP) to form pyridoxine 5'-phosphate (PNP) and inorganic phosphate. The chain is Pyridoxine 5'-phosphate synthase from Chromobacterium violaceum (strain ATCC 12472 / DSM 30191 / JCM 1249 / CCUG 213 / NBRC 12614 / NCIMB 9131 / NCTC 9757 / MK).